The following is a 1265-amino-acid chain: 1-phosphatidylinositol 4,5-bisphosphate phosphodiesterase gamma-2 (1265 aa).

The 112-residue stretch at 20-131 folds into the PH domain; sequence RALELGTVMT…WLSGLKILHQ (112 aa). One can recognise a PI-PLC X-box domain in the interval 312–456; that stretch reads QDMNNPLSHY…LREKIIIKHK (145 aa). Active-site residues include His327 and His372. 2 SH2 domains span residues 532-635 and 646-735; these read WFHK…TDPV and WYYD…RYPV. Phosphotyrosine; by BTK occurs at positions 753 and 759. The SH3 domain occupies 769–829; the sequence is MPQRTVKALY…PSNYVEDISA (61 aa). The PI-PLC Y-box domain maps to 930-1044; the sequence is LSDLVVYCKP…GYVLQPESMR (115 aa). The region spanning 1038–1169 is the C2 domain; sequence LQPESMRSEK…SGFRSVPLKN (132 aa). Tyr1197 is modified (phosphotyrosine; by BTK). Residues Tyr1217 and Tyr1245 each carry the phosphotyrosine modification.

Part of a complex composed of EEIG1, TNFRSF11A/RANK, PLCG2, GAB2, TEC and BTK; complex formation increases in the presence of TNFSF11/RANKL. Interacts (via SH2 domain) with CSF1R (tyrosine phosphorylated). Interacts constitutively with THEMIS2. Requires Ca(2+) as cofactor. Phosphorylated on tyrosine residues by CSF1R. Phosphorylated on tyrosine residues by BTK and SYK; upon ligand-induced activation of a variety of growth factor receptors and immune system receptors. Phosphorylation leads to increased phospholipase activity.

It is found in the membrane raft. The catalysed reaction is a 1,2-diacyl-sn-glycero-3-phospho-(1D-myo-inositol-4,5-bisphosphate) + H2O = 1D-myo-inositol 1,4,5-trisphosphate + a 1,2-diacyl-sn-glycerol + H(+). The production of the second messenger molecules diacylglycerol (DAG) and inositol 1,4,5-trisphosphate (IP3) is mediated by activated phosphatidylinositol-specific phospholipase C enzymes. It is a crucial enzyme in transmembrane signaling. The chain is 1-phosphatidylinositol 4,5-bisphosphate phosphodiesterase gamma-2 from Rattus norvegicus (Rat).